An 83-amino-acid chain; its full sequence is CLAVATA3/ESR (CLE)-related protein 20 (83 aa).

The N-terminal stretch at methionine 1–alanine 29 is a signal peptide.

It belongs to the CLV3/ESR signal peptide family. As to expression, mostly expressed in roots, seedlings, leaves, flowers, stems and apex, and, to a lower extent, in siliques and pollen.

The protein localises to the secreted. It localises to the extracellular space. In terms of biological role, extracellular signal peptide that regulates cell fate. Represses root apical meristem maintenance. Inhibits irreversibly root growth by reducing cell division rates in the root apical meristem. Regulates the transition of protophloem cells from proliferation to differentiation, thus impinging on postembryonic growth capacity of the root meristem; this signaling pathway requires CRN and CLV2. This Arabidopsis thaliana (Mouse-ear cress) protein is CLAVATA3/ESR (CLE)-related protein 20.